A 261-amino-acid polypeptide reads, in one-letter code: Triosephosphate isomerase (261 aa).

10 to 12 (NWK) provides a ligand contact to substrate. Catalysis depends on His-100, which acts as the Electrophile. The active-site Proton acceptor is Glu-172. Substrate contacts are provided by residues Gly-178, Ser-218, and 239 to 240 (GG).

Belongs to the triosephosphate isomerase family. In terms of assembly, homodimer.

Its subcellular location is the cytoplasm. The catalysed reaction is D-glyceraldehyde 3-phosphate = dihydroxyacetone phosphate. It participates in carbohydrate biosynthesis; gluconeogenesis. Its pathway is carbohydrate degradation; glycolysis; D-glyceraldehyde 3-phosphate from glycerone phosphate: step 1/1. Involved in the gluconeogenesis. Catalyzes stereospecifically the conversion of dihydroxyacetone phosphate (DHAP) to D-glyceraldehyde-3-phosphate (G3P). The protein is Triosephosphate isomerase of Mycolicibacterium paratuberculosis (strain ATCC BAA-968 / K-10) (Mycobacterium paratuberculosis).